Reading from the N-terminus, the 364-residue chain is NADH-quinone oxidoreductase subunit H (364 aa).

8 helical membrane passes run 21–41, 88–108, 120–140, 159–179, 208–228, 267–287, 301–321, and 340–360; these read AGQI…LLLA, VFLL…AVIP, VGIL…IMGG, MVSY…LAGS, LPLL…GLAE, IVLI…APFP, FYYF…VSMA, and VFLP…VFGP.

This sequence belongs to the complex I subunit 1 family. As to quaternary structure, NDH-1 is composed of 14 different subunits. Subunits NuoA, H, J, K, L, M, N constitute the membrane sector of the complex.

The protein localises to the cell inner membrane. The catalysed reaction is a quinone + NADH + 5 H(+)(in) = a quinol + NAD(+) + 4 H(+)(out). Its function is as follows. NDH-1 shuttles electrons from NADH, via FMN and iron-sulfur (Fe-S) centers, to quinones in the respiratory chain. The immediate electron acceptor for the enzyme in this species is believed to be ubiquinone. Couples the redox reaction to proton translocation (for every two electrons transferred, four hydrogen ions are translocated across the cytoplasmic membrane), and thus conserves the redox energy in a proton gradient. This subunit may bind ubiquinone. The chain is NADH-quinone oxidoreductase subunit H from Phenylobacterium zucineum (strain HLK1).